The following is a 115-amino-acid chain: NADH-ubiquinone oxidoreductase chain 3 (115 aa).

3 helical membrane passes run Leu3 to Trp23, Phe55 to Leu75, and Leu84 to Tyr104.

This sequence belongs to the complex I subunit 3 family. As to quaternary structure, core subunit of respiratory chain NADH dehydrogenase (Complex I) which is composed of 45 different subunits. Interacts with TMEM186. Interacts with TMEM242.

It localises to the mitochondrion inner membrane. It catalyses the reaction a ubiquinone + NADH + 5 H(+)(in) = a ubiquinol + NAD(+) + 4 H(+)(out). In terms of biological role, core subunit of the mitochondrial membrane respiratory chain NADH dehydrogenase (Complex I) which catalyzes electron transfer from NADH through the respiratory chain, using ubiquinone as an electron acceptor. Essential for the catalytic activity of complex I. The sequence is that of NADH-ubiquinone oxidoreductase chain 3 from Sigmodon hispidus (Hispid cotton rat).